We begin with the raw amino-acid sequence, 158 residues long: Pyruvoyl-dependent arginine decarboxylase (158 aa).

A Pyruvic acid (Ser) modification is found at Ser44.

It belongs to the PdaD family. The cofactor is pyruvate.

The enzyme catalyses L-arginine + H(+) = agmatine + CO2. In Pyrococcus abyssi (strain GE5 / Orsay), this protein is Pyruvoyl-dependent arginine decarboxylase.